The primary structure comprises 178 residues: MSRVGKKIIDIPSDVTVTFDGNHVTVKGPKGELSRTLNERMTFKQEENTIEVVRPSDSKEDRTNHGTTRALLNNMVQGVSQGYVKVLELVGVGYRAQMQGKDLILNVGYSHPVEIKAEENITFSVEKNTVVKVEGISKEQVGALASNIRSVRPPEPYKGKGIRYQGEYVRRKEGKTGK.

The protein belongs to the universal ribosomal protein uL6 family. Part of the 50S ribosomal subunit.

This protein binds to the 23S rRNA, and is important in its secondary structure. It is located near the subunit interface in the base of the L7/L12 stalk, and near the tRNA binding site of the peptidyltransferase center. In Staphylococcus aureus (strain Mu3 / ATCC 700698), this protein is Large ribosomal subunit protein uL6.